Reading from the N-terminus, the 325-residue chain is Heat-inducible transcription repressor HrcA (325 aa).

Belongs to the HrcA family.

Negative regulator of class I heat shock genes (grpE-dnaK-dnaJ and groELS operons). Prevents heat-shock induction of these operons. The protein is Heat-inducible transcription repressor HrcA of Staphylococcus epidermidis (strain ATCC 35984 / DSM 28319 / BCRC 17069 / CCUG 31568 / BM 3577 / RP62A).